Here is a 388-residue protein sequence, read N- to C-terminus: Staphopain A (388 aa).

The signal sequence occupies residues 1-25 (MKRNFPKLIALSLIFSLSITPIANA). The propeptide occupies 26–214 (ESNSNIKAKD…TSQFKSNNYT (189 aa)). Catalysis depends on residues Cys238, His334, and Asn355.

This sequence belongs to the peptidase C47 family. In terms of assembly, in the cytoplasm, prematurely activated/folded ScpA forms a stable non-covalent complex with ScpB. Cleavage leads to the activation of ScpA probably by an auto-catalytic manner.

It localises to the secreted. It catalyses the reaction Broad endopeptidase action on proteins including elastin, but rather limited hydrolysis of small-molecule substrates. Assays are conveniently made with hemoglobin, casein or Z-Phe-Arg-NHMec as substrate.. Its activity is regulated as follows. Prematurely activated/folded staphopain A is inhibited by staphostatin A (ScpB), which is probably required to protect staphylococcal cytoplasmic proteins from degradation by ScpA. In terms of biological role, cysteine protease that plays an important role in the inhibition of host innate immune response. Cleaves host elastins found in connective tissues, pulmonary surfactant protein A in the lungs, and the chemokine receptor CXCR2 on leukocytes. Proteolytic cleavage of surfactant protein A impairs bacterial phagocytosis by neutrophils while CXCR2 degradation blocks neutrophil activation and chemotaxis. Additionally, promotes vascular leakage by activating the plasma kallikerin/kinin system, resulting in hypotension. This Staphylococcus aureus (strain MRSA252) protein is Staphopain A (sspP).